The following is a 221-amino-acid chain: MVFVKMTDVYLMIVMLMGLGFSIELSNGHKFYVGGRDGWVLTPSEDYSHWSHRNRFQVNDTLYFKYVKGKDSVLEVSEKEYNTCNTTHPLTSLSDGDSLFLLSRSDPFFFVSGNSGSCLKGQKLAVTVMSTGHHSHTPRHPSPSPSPSASPVRKALLSPAPIPVHKALSSPAPTPGVDPSHSEVLAPAPGPAAAVRNLAGSVAPGVISLGLVLVIMISSMV.

An N-terminal signal peptide occupies residues 1-21; sequence MVFVKMTDVYLMIVMLMGLGF. The 102-residue stretch at 29 to 130 folds into the Phytocyanin domain; it reads HKFYVGGRDG…GQKLAVTVMS (102 aa). N-linked (GlcNAc...) asparagine glycosylation is found at Asn-59 and Asn-85. Cys-84 and Cys-118 are joined by a disulfide. The segment at 130–185 is disordered; the sequence is STGHHSHTPRHPSPSPSPSASPVRKALLSPAPIPVHKALSSPAPTPGVDPSHSEVL. Asn-197 carries the GPI-anchor amidated asparagine lipid modification. Residues 198–221 constitute a propeptide, removed in mature form; sequence LAGSVAPGVISLGLVLVIMISSMV.

Belongs to the early nodulin-like (ENODL) family. Confined to flowers.

The protein resides in the cell membrane. May act as a carbohydrate transporter. The sequence is that of Early nodulin-like protein 4 from Arabidopsis thaliana (Mouse-ear cress).